The primary structure comprises 158 residues: NAD(P)H-quinone oxidoreductase subunit J, chloroplastic (158 aa).

It belongs to the complex I 30 kDa subunit family. As to quaternary structure, NDH is composed of at least 16 different subunits, 5 of which are encoded in the nucleus.

The protein resides in the plastid. It localises to the chloroplast thylakoid membrane. It catalyses the reaction a plastoquinone + NADH + (n+1) H(+)(in) = a plastoquinol + NAD(+) + n H(+)(out). It carries out the reaction a plastoquinone + NADPH + (n+1) H(+)(in) = a plastoquinol + NADP(+) + n H(+)(out). NDH shuttles electrons from NAD(P)H:plastoquinone, via FMN and iron-sulfur (Fe-S) centers, to quinones in the photosynthetic chain and possibly in a chloroplast respiratory chain. The immediate electron acceptor for the enzyme in this species is believed to be plastoquinone. Couples the redox reaction to proton translocation, and thus conserves the redox energy in a proton gradient. The protein is NAD(P)H-quinone oxidoreductase subunit J, chloroplastic of Piper cenocladum (Ant piper).